The chain runs to 3623 residues: Cubilin (3623 aa).

An N-terminal signal peptide occupies residues 1 to 23; sequence MMNMSLPFLWSLLTLLIFAEVNG. Positions 24–35 are cleaved as a propeptide — removed in mature form; the sequence is EAGELELQRQKR. Positions 42-49 are interaction with AMN; sequence PRMATERG. A glycan (N-linked (GlcNAc...) asparagine) is linked at Asn-105. The region spanning 132-168 is the EGF-like 1 domain; the sequence is DKKVCSSNPCQNGGTCLNLHDSFFCICPPQWKGPLCS. Cystine bridges form between Cys-136–Cys-147, Cys-141–Cys-156, Cys-158–Cys-167, Cys-174–Cys-190, Cys-184–Cys-199, Cys-201–Cys-210, Cys-267–Cys-280, Cys-274–Cys-289, and Cys-292–Cys-303. An EGF-like 2; calcium-binding domain is found at 170 to 211; that stretch reads DVNECEIYSGTPLSCQNGGTCVNTMGSYSCHCPPETYGPQCA. The EGF-like 3; calcium-binding domain maps to 263–304; sequence DRDECSFQPGPCSTLVQCFNTQGSFYCGACPTGWQGNGYICE. In terms of domain architecture, EGF-like 4; calcium-binding spans 305-348; it reads DINECEINNGGCSVAPPVECVNTPGSSHCQACPPGYQGDGRVCT. 2 EGF-like domains span residues 349 to 385 and 395 to 430; these read LTDICSVSNGGCHPDASCSSTLGSLPLCTCLPGYTGN and LSNICLSHPCLNGQCIDTVSGYFCKCDSGWTGVNCT. Intrachain disulfides connect Cys-353–Cys-366, Cys-360–Cys-376, Cys-399–Cys-409, Cys-404–Cys-418, Cys-420–Cys-429, Cys-436–Cys-447, Cys-441–Cys-456, Cys-458–Cys-467, Cys-474–Cys-500, Cys-527–Cys-549, Cys-590–Cys-616, Cys-643–Cys-665, and Cys-708–Cys-734. Asn-428 carries N-linked (GlcNAc...) asparagine glycosylation. An EGF-like 7; calcium-binding domain is found at 432–468; that stretch reads NINECLSNPCLNGGTCVDGVDSFSCECTRLWTGALCQ. 27 consecutive CUB domains span residues 474–586, 590–702, 708–816, 816–928, 932–1042, 1048–1161, 1165–1277, 1278–1389, 1391–1506, 1510–1619, 1620–1734, 1738–1850, 1852–1963, 1978–2091, 2092–2213, 2217–2334, 2336–2448, 2452–2565, 2570–2687, 2689–2801, 2805–2919, 2920–3035, 3037–3150, 3157–3274, 3278–3393, 3395–3507, and 3511–3623; these read CGES…WETQ, CGGI…YLTS, CGGN…YQVA, ACGD…FSAE, CGEI…YEAI, CLQD…WDGS, CGGN…YRQT, CENV…WFVY, CGGE…WQAV, CGGI…FRQA, CGGH…VTAS, CGGT…FMKI, GNDN…WFAV, CGGF…FHKS, CGGY…YEAK, CGGN…YSIA, CGGR…FESS, CGGD…YTSS, CGGS…YSFT, CGGI…WNTQ, CGGI…FVSR, CGSN…YRII, CGGV…FRQT, CGGY…YTIM, CGGT…YQIA, CNRD…WTSS, and CGGT…TWDS. N-linked (GlcNAc...) asparagine glycosylation is present at Asn-482. Asn-711, Asn-749, Asn-781, and Asn-857 each carry an N-linked (GlcNAc...) asparagine glycan. 2 disulfide bridges follow: Cys-869-Cys-891 and Cys-932-Cys-958. An N-linked (GlcNAc...) asparagine glycan is attached at Asn-957. Residue Glu-980 coordinates Ca(2+). N-linked (GlcNAc...) asparagine glycosylation occurs at Asn-984. Cys-985 and Cys-1005 are disulfide-bonded. Residues Asp-988, Asp-1027, Asp-1029, and Leu-1030 each contribute to the Ca(2+) site. Cys-1048 and Cys-1074 are joined by a disulfide. An N-linked (GlcNAc...) asparagine glycan is attached at Asn-1092. Positions 1096, 1105, 1146, 1148, and 1149 each coordinate Ca(2+). Cys-1165 and Cys-1191 are oxidised to a cystine. A glycan (N-linked (GlcNAc...) asparagine) is linked at Asn-1168. Glu-1213 provides a ligand contact to Ca(2+). A glycan (N-linked (GlcNAc...) asparagine) is linked at Asn-1217. An intrachain disulfide couples Cys-1218 to Cys-1240. Residues Asp-1221, Asp-1262, Gly-1264, and Gln-1265 each coordinate Ca(2+). A disulfide bridge links Cys-1278 with Cys-1306. 3 N-linked (GlcNAc...) asparagine glycosylation sites follow: Asn-1285, Asn-1307, and Asn-1319. Glu-1328 provides a ligand contact to Ca(2+). Asn-1332 is a glycosylation site (N-linked (GlcNAc...) asparagine). An intrachain disulfide couples Cys-1333 to Cys-1351. Residues Asp-1336, Asp-1373, and Val-1375 each coordinate Ca(2+). Disulfide bonds link Cys-1391–Cys-1417 and Cys-1444–Cys-1466. Asn-1500 carries N-linked (GlcNAc...) asparagine glycosylation. Cys-1510 and Cys-1536 are disulfide-bonded. N-linked (GlcNAc...) asparagine glycosylation occurs at Asn-1551. Cystine bridges form between Cys-1563-Cys-1581, Cys-1620-Cys-1647, Cys-1675-Cys-1697, Cys-1738-Cys-1764, and Cys-1791-Cys-1812. The N-linked (GlcNAc...) asparagine glycan is linked to Asn-1646. Residues Asn-1802, Asn-1819, and Asn-1885 are each glycosylated (N-linked (GlcNAc...) asparagine). 3 disulfides stabilise this stretch: Cys-1905–Cys-1927, Cys-1978–Cys-2006, and Cys-2032–Cys-2054. N-linked (GlcNAc...) asparagine glycosylation is found at Asn-2085 and Asn-2117. Intrachain disulfides connect Cys-2092-Cys-2118 and Cys-2217-Cys-2247. N-linked (GlcNAc...) asparagine glycosylation is present at Asn-2274. 2 disulfide bridges follow: Cys-2275/Cys-2297 and Cys-2336/Cys-2363. Asn-2386 and Asn-2400 each carry an N-linked (GlcNAc...) asparagine glycan. 3 disulfide bridges follow: Cys-2390–Cys-2411, Cys-2452–Cys-2478, and Cys-2505–Cys-2527. Residues Asn-2531, Asn-2581, Asn-2592, and Asn-2610 are each glycosylated (N-linked (GlcNAc...) asparagine). Cys-2570 and Cys-2599 are oxidised to a cystine. Cystine bridges form between Cys-2628/Cys-2649, Cys-2689/Cys-2715, Cys-2742/Cys-2764, Cys-2805/Cys-2831, Cys-2860/Cys-2883, Cys-2920/Cys-2946, and Cys-2977/Cys-2999. The N-linked (GlcNAc...) asparagine glycan is linked to Asn-2813. Residues Asn-2923 and Asn-2945 are each glycosylated (N-linked (GlcNAc...) asparagine). Thr-3008 carries the phosphothreonine modification. Intrachain disulfides connect Cys-3037–Cys-3064 and Cys-3091–Cys-3113. N-linked (GlcNAc...) asparagine glycans are attached at residues Asn-3042, Asn-3103, Asn-3125, and Asn-3165. 2 disulfides stabilise this stretch: Cys-3157/Cys-3185 and Cys-3215/Cys-3237. N-linked (GlcNAc...) asparagine glycosylation is found at Asn-3268, Asn-3283, Asn-3290, and Asn-3295. Intrachain disulfides connect Cys-3278–Cys-3306 and Cys-3332–Cys-3354. The N-linked (GlcNAc...) asparagine glycan is linked to Asn-3357. The cysteines at positions 3395 and 3421 are disulfide-linked. Residues Asn-3430, Asn-3457, Asn-3533, and Asn-3576 are each glycosylated (N-linked (GlcNAc...) asparagine). Cystine bridges form between Cys-3448–Cys-3470, Cys-3511–Cys-3537, and Cys-3564–Cys-3586.

As to quaternary structure, interacts with AMN. Component of the cubam complex composed of one CUBN trimer and one AMN chain. The cubam complex can dimerize. Interacts with LRP2 in a dual-receptor complex in a calcium-dependent manner. Found in a complex with PID1/PCLI1, LRP1 and CUBNI. Interacts with LRP1 and PID1/PCLI1. The precursor is cleaved by a trans-Golgi proteinase furin, removing a propeptide. Post-translationally, N-glycosylated. In terms of tissue distribution, detected in kidney cortex (at protein level). Expressed in kidney proximal tubule cells, placenta, visceral yolk-sac cells and in absorptive intestinal cells. Expressed in the epithelium of intestine and kidney.

It is found in the apical cell membrane. It localises to the cell membrane. The protein resides in the membrane. The protein localises to the coated pit. Its subcellular location is the endosome. It is found in the lysosome membrane. Endocytic receptor which plays a role in lipoprotein, vitamin and iron metabolism by facilitating their uptake. Acts together with LRP2 to mediate endocytosis of high-density lipoproteins, GC, hemoglobin, ALB, TF and SCGB1A1. Acts together with AMN to mediate endocytosis of the CBLIF-cobalamin complex. Binds to ALB, MB, Kappa and lambda-light chains, TF, hemoglobin, GC, SCGB1A1, APOA1, high density lipoprotein, and the CBLIF-cobalamin complex. Ligand binding requires calcium. Serves as important transporter in several absorptive epithelia, including intestine, renal proximal tubules and embryonic yolk sac. May play an important role in the development of the peri-implantation embryo through internalization of APOA1 and cholesterol. Binds to LGALS3 at the maternal-fetal interface. The protein is Cubilin (CUBN) of Homo sapiens (Human).